A 505-amino-acid polypeptide reads, in one-letter code: Probable inorganic carbon transporter subunit DabB (505 aa).

The next 13 membrane-spanning stretches (helical) occupy residues 9-29, 37-57, 68-88, 105-123, 162-182, 204-224, 231-251, 259-279, 303-323, 355-375, 382-402, 410-430, and 446-466; these read SLLT…LLFL, FVRI…LILA, WHLD…GFII, YFTL…WLSG, LFLL…HATG, TGIQ…WPFQ, IVAP…AGGI, LFHG…SVLI, GFML…HLIL, LWVM…WLTA, LISA…LVAF, IAGL…HHLF, and MSAV…GTWV.

It belongs to the inorganic carbon transporter (TC 9.A.2) DabB family. As to quaternary structure, forms a complex with DabA.

The protein resides in the cell membrane. In terms of biological role, part of an energy-coupled inorganic carbon pump. In Bacillus subtilis (strain 168), this protein is Probable inorganic carbon transporter subunit DabB.